We begin with the raw amino-acid sequence, 280 residues long: Dermonecrotic toxin LsSicTox-alphaIA1 (280 aa).

Histidine 12 is an active-site residue. Residues glutamate 32 and aspartate 34 each contribute to the Mg(2+) site. The active-site Nucleophile is the histidine 48. Disulfide bonds link cysteine 52-cysteine 58 and cysteine 54-cysteine 197. Aspartate 92 is a Mg(2+) binding site.

It belongs to the arthropod phospholipase D family. Class II subfamily. Requires Mg(2+) as cofactor. In terms of tissue distribution, expressed by the venom gland.

The protein resides in the secreted. The catalysed reaction is an N-(acyl)-sphingosylphosphocholine = an N-(acyl)-sphingosyl-1,3-cyclic phosphate + choline. It catalyses the reaction an N-(acyl)-sphingosylphosphoethanolamine = an N-(acyl)-sphingosyl-1,3-cyclic phosphate + ethanolamine. The enzyme catalyses a 1-acyl-sn-glycero-3-phosphocholine = a 1-acyl-sn-glycero-2,3-cyclic phosphate + choline. It carries out the reaction a 1-acyl-sn-glycero-3-phosphoethanolamine = a 1-acyl-sn-glycero-2,3-cyclic phosphate + ethanolamine. Functionally, dermonecrotic toxins cleave the phosphodiester linkage between the phosphate and headgroup of certain phospholipids (sphingolipid and lysolipid substrates), forming an alcohol (often choline) and a cyclic phosphate. This toxin acts on sphingomyelin (SM). It may also act on ceramide phosphoethanolamine (CPE), lysophosphatidylcholine (LPC) and lysophosphatidylethanolamine (LPE), but not on lysophosphatidylserine (LPS), and lysophosphatidylglycerol (LPG). It acts by transphosphatidylation, releasing exclusively cyclic phosphate products as second products. Induces dermonecrosis, hemolysis, increased vascular permeability, edema, inflammatory response, and platelet aggregation. In Loxosceles similis (Brazilian brown spider), this protein is Dermonecrotic toxin LsSicTox-alphaIA1.